Here is a 1052-residue protein sequence, read N- to C-terminus: uncharacterized protein (1052 aa).

The Helicase ATP-binding domain occupies 389–561 (WINKGKTFAI…NKGGNYIMIN (173 aa)). 400-407 (SAMGTGKT) is an ATP binding site.

The protein belongs to the mimivirus R1 family.

This is an uncharacterized protein from Acanthamoeba polyphaga mimivirus (APMV).